The following is a 405-amino-acid chain: Maintenance of mitochondrial morphology protein 1 (405 aa).

Residues 1 to 86 are Lumenal-facing; the sequence is MQVLNFYVNP…TGSTKSFTQG (86 aa). A helical membrane pass occupies residues 87–107; it reads LIIGQLSVIILLGIFIKFFVF. Topologically, residues 108–405 are cytoplasmic; it reads ADSSTTSSTS…QPVSTTESDH (298 aa). The region spanning 166–385 is the SMP-LTD domain; sequence APESLDWFNV…EPRFQVVKLP (220 aa). Residues 303–324 form a disordered region; the sequence is SEPRVAMDSPQSTRDDNSEEPN.

This sequence belongs to the MMM1 family. In terms of assembly, homodimer. Component of the ER-mitochondria encounter structure (ERMES) or MDM complex, composed of MMM1, MDM10, MDM12 and MDM34. An MMM1 homodimer associates with one molecule of MDM12 on each side in a pairwise head-to-tail manner, and the SMP-LTD domains of MMM1 and MDM12 generate a continuous hydrophobic tunnel for phospholipid trafficking.

The protein resides in the endoplasmic reticulum membrane. Functionally, component of the ERMES/MDM complex, which serves as a molecular tether to connect the endoplasmic reticulum (ER) and mitochondria. Components of this complex are involved in the control of mitochondrial shape and protein biogenesis, and function in nonvesicular lipid trafficking between the ER and mitochondria. The MDM12-MMM1 subcomplex functions in the major beta-barrel assembly pathway that is responsible for biogenesis of all outer membrane beta-barrel proteins, and acts in a late step after the SAM complex. The MDM10-MDM12-MMM1 subcomplex further acts in the TOM40-specific pathway after the action of the MDM12-MMM1 complex. Essential for establishing and maintaining the structure of mitochondria and maintenance of mtDNA nucleoids. The sequence is that of Maintenance of mitochondrial morphology protein 1 from Meyerozyma guilliermondii (strain ATCC 6260 / CBS 566 / DSM 6381 / JCM 1539 / NBRC 10279 / NRRL Y-324) (Yeast).